Consider the following 498-residue polypeptide: Pyruvate kinase (498 aa).

Substrate is bound at residue arginine 53. Residues asparagine 55, serine 57, aspartate 87, and threonine 88 each contribute to the K(+) site. An ATP-binding site is contributed by 55-58 (NFSH). Residues arginine 94 and lysine 178 each coordinate ATP. Residue glutamate 240 coordinates Mg(2+). Substrate is bound by residues glycine 263, aspartate 264, and threonine 296. Aspartate 264 contacts Mg(2+).

This sequence belongs to the pyruvate kinase family. Homotetramer. It depends on Mg(2+) as a cofactor. K(+) is required as a cofactor.

It catalyses the reaction pyruvate + ATP = phosphoenolpyruvate + ADP + H(+). The protein operates within carbohydrate degradation; glycolysis; pyruvate from D-glyceraldehyde 3-phosphate: step 5/5. The chain is Pyruvate kinase (PYK) from Trypanoplasma borreli.